Here is a 60-residue protein sequence, read N- to C-terminus: uncharacterized protein (60 aa).

This is an uncharacterized protein from Lepidoptera (butterflies and moths).